We begin with the raw amino-acid sequence, 187 residues long: Elongation factor P (187 aa).

The protein belongs to the elongation factor P family.

The protein localises to the cytoplasm. It participates in protein biosynthesis; polypeptide chain elongation. Its function is as follows. Involved in peptide bond synthesis. Stimulates efficient translation and peptide-bond synthesis on native or reconstituted 70S ribosomes in vitro. Probably functions indirectly by altering the affinity of the ribosome for aminoacyl-tRNA, thus increasing their reactivity as acceptors for peptidyl transferase. This is Elongation factor P from Mycobacterium ulcerans (strain Agy99).